The sequence spans 294 residues: 33 kDa chaperonin (294 aa).

Cystine bridges form between Cys239/Cys241 and Cys272/Cys275.

This sequence belongs to the HSP33 family. In terms of processing, under oxidizing conditions two disulfide bonds are formed involving the reactive cysteines. Under reducing conditions zinc is bound to the reactive cysteines and the protein is inactive.

It is found in the cytoplasm. Its function is as follows. Redox regulated molecular chaperone. Protects both thermally unfolding and oxidatively damaged proteins from irreversible aggregation. Plays an important role in the bacterial defense system toward oxidative stress. This is 33 kDa chaperonin from Lacticaseibacillus paracasei (strain ATCC 334 / BCRC 17002 / CCUG 31169 / CIP 107868 / KCTC 3260 / NRRL B-441) (Lactobacillus paracasei).